Consider the following 81-residue polypeptide: ATP synthase subunit c, chloroplastic (81 aa).

The next 2 membrane-spanning stretches (helical) occupy residues 3–23 and 57–77; these read PLIS…ASIG and LAFM…LLFA.

This sequence belongs to the ATPase C chain family. As to quaternary structure, F-type ATPases have 2 components, F(1) - the catalytic core - and F(0) - the membrane proton channel. F(1) has five subunits: alpha(3), beta(3), gamma(1), delta(1), epsilon(1). F(0) has four main subunits: a(1), b(1), b'(1) and c(10-14). The alpha and beta chains form an alternating ring which encloses part of the gamma chain. F(1) is attached to F(0) by a central stalk formed by the gamma and epsilon chains, while a peripheral stalk is formed by the delta, b and b' chains.

It localises to the plastid. The protein resides in the chloroplast thylakoid membrane. In terms of biological role, f(1)F(0) ATP synthase produces ATP from ADP in the presence of a proton or sodium gradient. F-type ATPases consist of two structural domains, F(1) containing the extramembraneous catalytic core and F(0) containing the membrane proton channel, linked together by a central stalk and a peripheral stalk. During catalysis, ATP synthesis in the catalytic domain of F(1) is coupled via a rotary mechanism of the central stalk subunits to proton translocation. Key component of the F(0) channel; it plays a direct role in translocation across the membrane. A homomeric c-ring of between 10-14 subunits forms the central stalk rotor element with the F(1) delta and epsilon subunits. The polypeptide is ATP synthase subunit c, chloroplastic (Ipomoea purpurea (Common morning glory)).